Reading from the N-terminus, the 150-residue chain is Transcriptional repressor NrdR (150 aa).

A zinc finger lies at 3–34 (CPFCNFEESKVVDSRATDDNTTIRRRRECLNC). In terms of domain architecture, ATP-cone spans 49 to 139 (VLVVKKDLTR…VYRQFKDINT (91 aa)).

The protein belongs to the NrdR family. Requires Zn(2+) as cofactor.

In terms of biological role, negatively regulates transcription of bacterial ribonucleotide reductase nrd genes and operons by binding to NrdR-boxes. The polypeptide is Transcriptional repressor NrdR (Clostridium botulinum (strain Alaska E43 / Type E3)).